We begin with the raw amino-acid sequence, 94 residues long: Ferredoxin-like protein (94 aa).

2 consecutive 4Fe-4S ferredoxin-type domains span residues 20–52 and 53–83; these read PHIR…RETN and GKVT…WEWP.

The protein to ferredoxins from P.putida and C.tartarivorum, ferredoxin I from A.vinelandii, ferredoxin II from D.desulfuricans.

Could be a 3Fe-4S cluster-containing protein. The protein is Ferredoxin-like protein (fixX) of Azotobacter vinelandii.